The sequence spans 66 residues: Large ribosomal subunit protein uL29 (66 aa).

It belongs to the universal ribosomal protein uL29 family.

This is Large ribosomal subunit protein uL29 from Brucella abortus (strain S19).